Consider the following 131-residue polypeptide: Methylglyoxal synthase (131 aa).

Residues 1–131 form the MGS-like domain; it reads MKIALIAHDK…GDLDYRKFRK (131 aa). Residues His-8, Lys-12, 34-37, and 54-55 contribute to the substrate site; these read TGTT and SG. Residue Asp-60 is the Proton donor/acceptor of the active site. His-87 is a binding site for substrate.

This sequence belongs to the methylglyoxal synthase family.

It catalyses the reaction dihydroxyacetone phosphate = methylglyoxal + phosphate. Catalyzes the formation of methylglyoxal from dihydroxyacetone phosphate. The chain is Methylglyoxal synthase from Bacillus cytotoxicus (strain DSM 22905 / CIP 110041 / 391-98 / NVH 391-98).